Consider the following 243-residue polypeptide: MIKILIPTAKEMKVCQNIAWPKLSAQTKIIIDYFSTLTVSDLEDIYRINTSAARCEAQRWQDFKAKQLTLNPAIKLFNGLMYRNIKRHNLSTSEAQFMENSVFITSALYGIIPAMTLISPHRLDFNTKIKINNNSLKVFWRENYDTFMQSDDIMVSLLSNEFETVFSPKERQKLIHLNFIEDRDGQLKTHSTISKKARGKCLTAMMENNCQTLEHLKQLRFDGFCYDNELSDSKQLTFVKKQT.

Belongs to the UPF0246 family.

This Streptococcus agalactiae serotype V (strain ATCC BAA-611 / 2603 V/R) protein is UPF0246 protein SAG2081.